Consider the following 687-residue polypeptide: A-kinase anchor protein 8 (687 aa).

The interval 1–195 (MEQSYGGYGA…FLRGRGQGRF (195 aa)) is interaction with MCM2. An interaction with DPY30 region spans residues 1–210 (MEQSYGGYGA…SSTFIRSDPF (210 aa)). Ser72 carries the post-translational modification Phosphoserine. Residues 104–124 (SKEGGRGGISSGGEGMQDRDS) form a disordered region. At Arg109 the chain carries Asymmetric dimethylarginine; alternate. An Omega-N-methylarginine; alternate modification is found at Arg109. The span at 109–118 (RGGISSGGEG) shows a compositional bias: gly residues. The interaction with DDX5 stretch occupies residues 109–201 (RGGISSGGEG…QGRFQDRSNS (93 aa)). A nuclear matrix targeting site region spans residues 127–152 (RFQPYESYDSRPCMPEHTPYRPSYSY). The tract at residues 189–221 (GRGQGRFQDRSNSSTFIRSDPFMPPSASSEPLS) is disordered. Ser199 bears the Phosphoserine mark. An omega-N-methylarginine mark is found at Arg233 and Arg277. The interval 278 to 380 (SQTRIRDWPR…KQRRRDRMRD (103 aa)) is disordered. Composition is skewed to basic and acidic residues over residues 281 to 295 (RIRD…ERFG) and 312 to 321 (PDAKLARADS). Positions 287–304 (RRRGFERFGPDNMGRKRK) match the Bipartite nuclear localization signal motif. A Glycyl lysine isopeptide (Lys-Gly) (interchain with G-Cter in SUMO2) cross-link involves residue Lys315. Phosphoserine occurs at positions 321, 326, and 337. A compositionally biased stretch (acidic residues) spans 322–332 (EGDLSENDDGA). Basic and acidic residues predominate over residues 336 to 358 (RSGDEEFRGEDDLCDSRKQRGEK). The involved in chromatin-binding stretch occupies residues 385–448 (RIQFACSVCK…NKKIEKRRQE (64 aa)). 2 consecutive C2H2 AKAP95-type zinc fingers follow at residues 390 to 412 (CSVC…SKFH) and 479 to 502 (CLAC…SVDH). The involved in condensin complex recruitment stretch occupies residues 523–565 (SVLNNKHIVKMLEKYLKGEDPFVNETADLETEGDENLGEEKET). A Phosphothreonine modification is found at Thr553. Lys563 participates in a covalent cross-link: Glycyl lysine isopeptide (Lys-Gly) (interchain with G-Cter in SUMO2). Residues 568–585 (EVAAEVLAEVITAAVKAV) form an RII-binding region. Positions 572–589 (EVLAEVITAAVKAVEGDG) are required for interaction with MYCBP. Positions 606–687 (VDTAEAGSDS…DAEAKDTPTE (82 aa)) are disordered. A compositionally biased stretch (basic and acidic residues) spans 633-648 (RNMEDMARGEAAEARN). The segment covering 649-666 (EAAVPAAAAGSPVPVIAI) has biased composition (low complexity). Position 659 is a phosphoserine (Ser659).

This sequence belongs to the AKAP95 family. In terms of assembly, binds to dimeric RII-alpha regulatory subunit of PKA during mitosis. Interacts (via C-terminus) with FIGN. Interacts with NCAPD2, CCND1, CCND3, MCM2, RPS6KA1, PDE4A, CASP3. Interacts with DDX5, CCNE1. Interacts with NFKB1; detetcted in the cytoplasm. Interacts with MYCBP; MYCBP is translocated to the nucleus and the interaction prevents the association of the PKA catalytic subunit leading to suppression of PKA activity. Interacts with DPY30; mediating AKAP8 association with at least the MLL4/WBP7 HMT complex. Interacts with HDAC3; increased during mitosis. Interacts with GJA1; in the nucleus and in the nuclear membrane; the nuclear association increases with progress of cell cycle G1, S and G2 phase and decreases in M phase. Post-translationally, phosphorylated on tyrosine residues probably by SRC subfamily protein kinases; multiple phosphorylation is leading to dissociation from nuclear structures implicated in chromatin structural changes. In terms of tissue distribution, widely expressed. The protein has been detected in liver, fibroblasts, granulosa, myoblast, lymphoma and Sertoli cells.

The protein resides in the nucleus matrix. It localises to the nucleus. The protein localises to the nucleolus. Its subcellular location is the cytoplasm. In terms of biological role, anchoring protein that mediates the subcellular compartmentation of cAMP-dependent protein kinase (PKA type II). Acts as an anchor for a PKA-signaling complex onto mitotic chromosomes, which is required for maintenance of chromosomes in a condensed form throughout mitosis. Recruits condensin complex subunit NCAPD2 to chromosomes required for chromatin condensation; the function appears to be independent from PKA-anchoring. May help to deliver cyclin D/E to CDK4 to facilitate cell cycle progression. Required for cell cycle G2/M transition and histone deacetylation during mitosis. In mitotic cells recruits HDAC3 to the vicinity of chromatin leading to deacetylation and subsequent phosphorylation at 'Ser-10' of histone H3; in this function may act redundantly with AKAP8L. Involved in nuclear retention of RPS6KA1 upon ERK activation thus inducing cell proliferation. May be involved in regulation of DNA replication by acting as scaffold for MCM2. Enhances HMT activity of the KMT2 family MLL4/WBP7 complex and is involved in transcriptional regulation. In a teratocarcinoma cell line is involved in retinoic acid-mediated induction of developmental genes implicating H3 'Lys-4' methylation. May be involved in recruitment of active CASP3 to the nucleus in apoptotic cells. May act as a carrier protein of GJA1 for its transport to the nucleus. May play a repressive role in the regulation of rDNA transcription. Preferentially binds GC-rich DNA in vitro. In cells, associates with ribosomal RNA (rRNA) chromatin, preferentially with rRNA promoter and transcribed regions. Involved in modulation of Toll-like receptor signaling. Required for the cAMP-dependent suppression of TNF-alpha in early stages of LPS-induced macrophage activation; the function probably implicates targeting of PKA to NFKB1. This chain is A-kinase anchor protein 8 (Akap8), found in Rattus norvegicus (Rat).